Consider the following 372-residue polypeptide: Chaperone protein DnaJ (372 aa).

A J domain is found at Asp-5 to Gly-70. The CR-type zinc finger occupies Gly-130–Lys-208. Zn(2+)-binding residues include Cys-143, Cys-146, Cys-160, Cys-163, Cys-182, Cys-185, Cys-196, and Cys-199. CXXCXGXG motif repeat units follow at residues Cys-143–Gly-150, Cys-160–Gly-167, Cys-182–Gly-189, and Cys-196–Gly-203.

The protein belongs to the DnaJ family. In terms of assembly, homodimer. Zn(2+) serves as cofactor.

It is found in the cytoplasm. In terms of biological role, participates actively in the response to hyperosmotic and heat shock by preventing the aggregation of stress-denatured proteins and by disaggregating proteins, also in an autonomous, DnaK-independent fashion. Unfolded proteins bind initially to DnaJ; upon interaction with the DnaJ-bound protein, DnaK hydrolyzes its bound ATP, resulting in the formation of a stable complex. GrpE releases ADP from DnaK; ATP binding to DnaK triggers the release of the substrate protein, thus completing the reaction cycle. Several rounds of ATP-dependent interactions between DnaJ, DnaK and GrpE are required for fully efficient folding. Also involved, together with DnaK and GrpE, in the DNA replication of plasmids through activation of initiation proteins. This is Chaperone protein DnaJ from Pasteurella multocida (strain Pm70).